Consider the following 455-residue polypeptide: Bifunctional protein GlmU (455 aa).

The tract at residues 1-226 (MIAVAILAAG…YQEILGINDR (226 aa)) is pyrophosphorylase. Residues 7 to 10 (LAAG), K21, Q73, and 78 to 79 (GT) each bind UDP-N-acetyl-alpha-D-glucosamine. D103 contacts Mg(2+). UDP-N-acetyl-alpha-D-glucosamine is bound by residues G140, E155, N170, and N224. Residue N224 coordinates Mg(2+). A linker region spans residues 227-247 (KQLATAYKILQDRIKDDWLVA). The tract at residues 248 to 455 (GVTIMDPDSI…RPISSKQTEK (208 aa)) is N-acetyltransferase. 2 residues coordinate UDP-N-acetyl-alpha-D-glucosamine: R329 and K347. Catalysis depends on H359, which acts as the Proton acceptor. UDP-N-acetyl-alpha-D-glucosamine-binding residues include Y362 and N373. Acetyl-CoA is bound by residues A376, 382-383 (NY), A419, and R436.

This sequence in the N-terminal section; belongs to the N-acetylglucosamine-1-phosphate uridyltransferase family. It in the C-terminal section; belongs to the transferase hexapeptide repeat family. Homotrimer. Mg(2+) is required as a cofactor.

The protein localises to the cytoplasm. The enzyme catalyses alpha-D-glucosamine 1-phosphate + acetyl-CoA = N-acetyl-alpha-D-glucosamine 1-phosphate + CoA + H(+). The catalysed reaction is N-acetyl-alpha-D-glucosamine 1-phosphate + UTP + H(+) = UDP-N-acetyl-alpha-D-glucosamine + diphosphate. Its pathway is nucleotide-sugar biosynthesis; UDP-N-acetyl-alpha-D-glucosamine biosynthesis; N-acetyl-alpha-D-glucosamine 1-phosphate from alpha-D-glucosamine 6-phosphate (route II): step 2/2. The protein operates within nucleotide-sugar biosynthesis; UDP-N-acetyl-alpha-D-glucosamine biosynthesis; UDP-N-acetyl-alpha-D-glucosamine from N-acetyl-alpha-D-glucosamine 1-phosphate: step 1/1. It functions in the pathway bacterial outer membrane biogenesis; LPS lipid A biosynthesis. Catalyzes the last two sequential reactions in the de novo biosynthetic pathway for UDP-N-acetylglucosamine (UDP-GlcNAc). The C-terminal domain catalyzes the transfer of acetyl group from acetyl coenzyme A to glucosamine-1-phosphate (GlcN-1-P) to produce N-acetylglucosamine-1-phosphate (GlcNAc-1-P), which is converted into UDP-GlcNAc by the transfer of uridine 5-monophosphate (from uridine 5-triphosphate), a reaction catalyzed by the N-terminal domain. The chain is Bifunctional protein GlmU from Acaryochloris marina (strain MBIC 11017).